A 142-amino-acid polypeptide reads, in one-letter code: Galactose-6-phosphate isomerase subunit LacA (142 aa).

Belongs to the LacAB/RpiB family. As to quaternary structure, heteromultimeric protein consisting of LacA and LacB.

The catalysed reaction is aldehydo-D-galactose 6-phosphate = keto-D-tagatose 6-phosphate. Its pathway is carbohydrate metabolism; D-galactose 6-phosphate degradation; D-tagatose 6-phosphate from D-galactose 6-phosphate: step 1/1. The sequence is that of Galactose-6-phosphate isomerase subunit LacA from Staphylococcus aureus.